We begin with the raw amino-acid sequence, 254 residues long: CRISPR-associated endonuclease Cas1 (254 aa).

Positions 78, 146, and 161 each coordinate Mn(2+).

It belongs to the CRISPR-associated endonuclease Cas1 family. In terms of assembly, homodimer, forms a heterotetramer with a Cas2 homodimer. Mg(2+) serves as cofactor. The cofactor is Mn(2+).

CRISPR (clustered regularly interspaced short palindromic repeat), is an adaptive immune system that provides protection against mobile genetic elements (viruses, transposable elements and conjugative plasmids). CRISPR clusters contain spacers, sequences complementary to antecedent mobile elements, and target invading nucleic acids. CRISPR clusters are transcribed and processed into CRISPR RNA (crRNA). Acts as a dsDNA endonuclease. Involved in the integration of spacer DNA into the CRISPR cassette. The sequence is that of CRISPR-associated endonuclease Cas1 from Leptospira interrogans serogroup Icterohaemorrhagiae serovar Lai (strain 56601).